The chain runs to 271 residues: Phosphatidylglycerol--prolipoprotein diacylglyceryl transferase (271 aa).

7 helical membrane passes run 21 to 41, 60 to 80, 95 to 115, 124 to 144, 176 to 196, 203 to 223, and 230 to 250; these read ISVR…MWLA, LLFA…VLFY, VWTG…AMLW, FFGV…VGRL, SQLY…NWFI, GSVS…VEYV, and LGLF…MIIG. Position 143 (arginine 143) interacts with a 1,2-diacyl-sn-glycero-3-phospho-(1'-sn-glycerol).

It belongs to the Lgt family.

Its subcellular location is the cell inner membrane. The enzyme catalyses L-cysteinyl-[prolipoprotein] + a 1,2-diacyl-sn-glycero-3-phospho-(1'-sn-glycerol) = an S-1,2-diacyl-sn-glyceryl-L-cysteinyl-[prolipoprotein] + sn-glycerol 1-phosphate + H(+). The protein operates within protein modification; lipoprotein biosynthesis (diacylglyceryl transfer). Its function is as follows. Catalyzes the transfer of the diacylglyceryl group from phosphatidylglycerol to the sulfhydryl group of the N-terminal cysteine of a prolipoprotein, the first step in the formation of mature lipoproteins. The sequence is that of Phosphatidylglycerol--prolipoprotein diacylglyceryl transferase from Vibrio vulnificus (strain YJ016).